The following is a 171-amino-acid chain: Nucleoside-triphosphatase THEP1 (171 aa).

Residues 8–15 and 95–102 each bind ATP; these read GPPGAGKS and VYLIDEIG.

This sequence belongs to the THEP1 NTPase family.

It carries out the reaction a ribonucleoside 5'-triphosphate + H2O = a ribonucleoside 5'-diphosphate + phosphate + H(+). Has nucleotide phosphatase activity towards ATP, GTP, CTP, TTP and UTP. May hydrolyze nucleoside diphosphates with lower efficiency. This Ignicoccus hospitalis (strain KIN4/I / DSM 18386 / JCM 14125) protein is Nucleoside-triphosphatase THEP1.